The sequence spans 603 residues: Sulfite reductase [NADPH] flavoprotein alpha-component (603 aa).

The region spanning 64–202 (ITLISASQTG…QAETWRAAIV (139 aa)) is the Flavodoxin-like domain. FMN contacts are provided by residues 70-75 (SQTGNA), 117-120 (STQG), and 153-162 (LGDSSYEHFA). The region spanning 236–452 (EAPLTAHLAL…IEHNDNFRLP (217 aa)) is the FAD-binding FR-type domain. Residues threonine 326, leucine 360, 390 to 393 (RLYS), 408 to 410 (TVG), tyrosine 414, and 423 to 426 (GGAS) each bind FAD. NADP(+) is bound by residues 523 to 524 (SR), 529 to 533 (KIYVQ), and aspartate 565. FAD is bound at residue tyrosine 603.

Belongs to the NADPH-dependent sulphite reductase flavoprotein subunit CysJ family. The protein in the N-terminal section; belongs to the flavodoxin family. It in the C-terminal section; belongs to the flavoprotein pyridine nucleotide cytochrome reductase family. Alpha(8)-beta(8). The alpha component is a flavoprotein, the beta component is a hemoprotein. FAD is required as a cofactor. The cofactor is FMN.

It carries out the reaction hydrogen sulfide + 3 NADP(+) + 3 H2O = sulfite + 3 NADPH + 4 H(+). It participates in sulfur metabolism; hydrogen sulfide biosynthesis; hydrogen sulfide from sulfite (NADPH route): step 1/1. Functionally, component of the sulfite reductase complex that catalyzes the 6-electron reduction of sulfite to sulfide. This is one of several activities required for the biosynthesis of L-cysteine from sulfate. The flavoprotein component catalyzes the electron flow from NADPH -&gt; FAD -&gt; FMN to the hemoprotein component. The sequence is that of Sulfite reductase [NADPH] flavoprotein alpha-component from Sodalis glossinidius (strain morsitans).